The sequence spans 165 residues: Phosphopantetheine adenylyltransferase (165 aa).

Thr10 is a binding site for substrate. Residues 10–11 and His18 contribute to the ATP site; that span reads TF. 3 residues coordinate substrate: Lys42, Leu75, and Arg89. Residues 90–92, Glu100, and 125–131 each bind ATP; these read GVR and VSFISSS.

This sequence belongs to the bacterial CoaD family. As to quaternary structure, homohexamer. The cofactor is Mg(2+).

Its subcellular location is the cytoplasm. The enzyme catalyses (R)-4'-phosphopantetheine + ATP + H(+) = 3'-dephospho-CoA + diphosphate. The protein operates within cofactor biosynthesis; coenzyme A biosynthesis; CoA from (R)-pantothenate: step 4/5. In terms of biological role, reversibly transfers an adenylyl group from ATP to 4'-phosphopantetheine, yielding dephospho-CoA (dPCoA) and pyrophosphate. The sequence is that of Phosphopantetheine adenylyltransferase from Buchnera aphidicola subsp. Acyrthosiphon pisum (strain 5A).